We begin with the raw amino-acid sequence, 589 residues long: Arginine--tRNA ligase (589 aa).

The short motif at 131-141 (ANPTGPLHVGH) is the 'HIGH' region element.

This sequence belongs to the class-I aminoacyl-tRNA synthetase family. As to quaternary structure, monomer.

It localises to the cytoplasm. The catalysed reaction is tRNA(Arg) + L-arginine + ATP = L-arginyl-tRNA(Arg) + AMP + diphosphate. The polypeptide is Arginine--tRNA ligase (Legionella pneumophila (strain Paris)).